A 377-amino-acid chain; its full sequence is Floricaula/leafy homolog (377 aa).

Residues 116-126 (RRRLDEEDPRR) show a composition bias toward basic and acidic residues. A disordered region spans residues 116–190 (RRRLDEEDPR…RKKGQRKVVD (75 aa)). The segment covering 131–141 (SGDNNTNTLDA) has biased composition (polar residues). 3 DNA-binding regions span residues 206-210 (REHPF), 275-282 (NKPKMRHY), and 346-349 (YVPT).

The protein belongs to the FLO/LFY family. In developing inflorescences, leaf primordia and very young leaves.

Its subcellular location is the nucleus. In terms of biological role, probable transcription factor. The protein is Floricaula/leafy homolog (FL) of Populus trichocarpa (Western balsam poplar).